The following is a 267-amino-acid chain: 3-methyl-2-oxobutanoate hydroxymethyltransferase (267 aa).

Mg(2+) contacts are provided by aspartate 45 and aspartate 84. 3-methyl-2-oxobutanoate is bound by residues 45-46 (DS), aspartate 84, and lysine 113. Glutamate 115 serves as a coordination point for Mg(2+). Glutamate 182 serves as the catalytic Proton acceptor.

The protein belongs to the PanB family. Homodecamer; pentamer of dimers. It depends on Mg(2+) as a cofactor.

The protein resides in the cytoplasm. The enzyme catalyses 3-methyl-2-oxobutanoate + (6R)-5,10-methylene-5,6,7,8-tetrahydrofolate + H2O = 2-dehydropantoate + (6S)-5,6,7,8-tetrahydrofolate. It participates in cofactor biosynthesis; coenzyme A biosynthesis. In terms of biological role, catalyzes the reversible reaction in which hydroxymethyl group from 5,10-methylenetetrahydrofolate is transferred onto alpha-ketoisovalerate to form ketopantoate. This is 3-methyl-2-oxobutanoate hydroxymethyltransferase from Saccharolobus islandicus (strain M.16.27) (Sulfolobus islandicus).